The chain runs to 473 residues: Ribulose bisphosphate carboxylase large chain 1 (473 aa).

The substrate site is built by Asn116 and Thr166. Lys168 serves as the catalytic Proton acceptor. Lys170 contacts substrate. Mg(2+) contacts are provided by Lys194, Asp196, and Glu197. Lys194 bears the N6-carboxylysine mark. The active-site Proton acceptor is the His287. Residues Arg288, His320, and Ser372 each coordinate substrate.

This sequence belongs to the RuBisCO large chain family. Type I subfamily. In terms of assembly, heterohexadecamer of 8 large chains and 8 small chains. Mg(2+) is required as a cofactor.

The catalysed reaction is 2 (2R)-3-phosphoglycerate + 2 H(+) = D-ribulose 1,5-bisphosphate + CO2 + H2O. The enzyme catalyses D-ribulose 1,5-bisphosphate + O2 = 2-phosphoglycolate + (2R)-3-phosphoglycerate + 2 H(+). Its function is as follows. RuBisCO catalyzes two reactions: the carboxylation of D-ribulose 1,5-bisphosphate, the primary event in carbon dioxide fixation, as well as the oxidative fragmentation of the pentose substrate. Both reactions occur simultaneously and in competition at the same active site. The sequence is that of Ribulose bisphosphate carboxylase large chain 1 from Acidithiobacillus ferrooxidans (Thiobacillus ferrooxidans).